Here is a 201-residue protein sequence, read N- to C-terminus: ATP-dependent Clp protease proteolytic subunit (201 aa).

The active-site Nucleophile is S98. H123 is a catalytic residue.

The protein belongs to the peptidase S14 family. Fourteen ClpP subunits assemble into 2 heptameric rings which stack back to back to give a disk-like structure with a central cavity, resembling the structure of eukaryotic proteasomes.

It is found in the cytoplasm. It carries out the reaction Hydrolysis of proteins to small peptides in the presence of ATP and magnesium. alpha-casein is the usual test substrate. In the absence of ATP, only oligopeptides shorter than five residues are hydrolyzed (such as succinyl-Leu-Tyr-|-NHMec, and Leu-Tyr-Leu-|-Tyr-Trp, in which cleavage of the -Tyr-|-Leu- and -Tyr-|-Trp bonds also occurs).. Its function is as follows. Cleaves peptides in various proteins in a process that requires ATP hydrolysis. Has a chymotrypsin-like activity. Plays a major role in the degradation of misfolded proteins. In Rickettsia conorii (strain ATCC VR-613 / Malish 7), this protein is ATP-dependent Clp protease proteolytic subunit.